The sequence spans 179 residues: Large ribosomal subunit protein uL5 (179 aa).

Belongs to the universal ribosomal protein uL5 family. Part of the 50S ribosomal subunit; part of the 5S rRNA/L5/L18/L25 subcomplex. Contacts the 5S rRNA and the P site tRNA. Forms a bridge to the 30S subunit in the 70S ribosome.

This is one of the proteins that bind and probably mediate the attachment of the 5S RNA into the large ribosomal subunit, where it forms part of the central protuberance. In the 70S ribosome it contacts protein S13 of the 30S subunit (bridge B1b), connecting the 2 subunits; this bridge is implicated in subunit movement. Contacts the P site tRNA; the 5S rRNA and some of its associated proteins might help stabilize positioning of ribosome-bound tRNAs. The chain is Large ribosomal subunit protein uL5 from Verminephrobacter eiseniae (strain EF01-2).